A 403-amino-acid polypeptide reads, in one-letter code: Blue light- and temperature-regulated antirepressor BluF (403 aa).

The BLUF domain occupies 2–93 (LTTLIYRSHI…ARRFGKAGME (92 aa)). The segment at 98–144 (RLHERDDVLQAVFDKGTSKFQLTYDDRALQFFRTFVLATEQSTYFEI) is joining helix. Residues 155–403 (DGSDKELDSC…IPSIAWPEKK (249 aa)) enclose the EAL domain.

In terms of assembly, monomer, it undergoes transient dimerization following photoexcitation or upon temperature reduction, with a relaxation time of about 2 minutes. The dimer may be the inactive state. Interacts with the N- and C-terminal domains of BluR. Can also interact with the C-terminal domain of MlrA. FAD serves as cofactor.

Binds to and releases the BluR repressor from its bound DNA target in a blue light-dependent (470 nm) fashion. A shift to low temperature also triggers a BluF-mediated relief of repression by BluR, suggesting BluF may serve as a thermometer. Blue light may act to increase the affinity of BluF for BluR, allowing it to be released from its operator. The protein has a reversible photocycle, and undergoes structural changes, probably in the EAL domain, in response to light. In Escherichia coli (strain K12), this protein is Blue light- and temperature-regulated antirepressor BluF.